Consider the following 349-residue polypeptide: Isopentenyl-diphosphate delta-isomerase (349 aa).

A substrate-binding site is contributed by 5–6 (RK). Residues Ser-61, 62–64 (SMT), Ser-92, and Asn-120 contribute to the FMN site. 92 to 94 (SMR) serves as a coordination point for substrate. A substrate-binding site is contributed by Gln-159. Residue Glu-160 coordinates Mg(2+). FMN-binding positions include Lys-189, Thr-219, 269–271 (GLR), and 290–291 (AR).

The protein belongs to the IPP isomerase type 2 family. In terms of assembly, homooctamer. Dimer of tetramers. Requires FMN as cofactor. It depends on NADPH as a cofactor. The cofactor is Mg(2+).

It is found in the cytoplasm. It catalyses the reaction isopentenyl diphosphate = dimethylallyl diphosphate. In terms of biological role, involved in the biosynthesis of isoprenoids. Catalyzes the 1,3-allylic rearrangement of the homoallylic substrate isopentenyl (IPP) to its allylic isomer, dimethylallyl diphosphate (DMAPP). The protein is Isopentenyl-diphosphate delta-isomerase of Picrophilus torridus (strain ATCC 700027 / DSM 9790 / JCM 10055 / NBRC 100828 / KAW 2/3).